The following is a 534-amino-acid chain: Cytochrome P450 78A9 (534 aa).

The helical transmembrane segment at 26–46 (LALSLLVASLASLALSLFFWS) threads the bilayer. Cysteine 474 is a heme binding site.

This sequence belongs to the cytochrome P450 family. It depends on heme as a cofactor. In terms of tissue distribution, expressed in the funiculus of developing ovules.

It localises to the membrane. In terms of biological role, plays a role in seed and fruit development. Functions probably in association with CYP78A6 in the regulation of seed growth. The chain is Cytochrome P450 78A9 (CYP78A9) from Arabidopsis thaliana (Mouse-ear cress).